Here is a 312-residue protein sequence, read N- to C-terminus: Pantothenate kinase (312 aa).

97 to 104 (GSVAVGKS) is an ATP binding site.

This sequence belongs to the prokaryotic pantothenate kinase family.

The protein localises to the cytoplasm. It catalyses the reaction (R)-pantothenate + ATP = (R)-4'-phosphopantothenate + ADP + H(+). It functions in the pathway cofactor biosynthesis; coenzyme A biosynthesis; CoA from (R)-pantothenate: step 1/5. The protein is Pantothenate kinase of Corynebacterium glutamicum (strain ATCC 13032 / DSM 20300 / JCM 1318 / BCRC 11384 / CCUG 27702 / LMG 3730 / NBRC 12168 / NCIMB 10025 / NRRL B-2784 / 534).